The following is a 396-amino-acid chain: Serine/threonine-protein kinase VRK1 (396 aa).

The 281-residue stretch at 37–317 folds into the Protein kinase domain; the sequence is WKLGSPIGQG…LLDYVEKPLY (281 aa). ATP contacts are provided by residues 43 to 51 and Lys-71; that span reads IGQGGFGCI. Lys-71 is covalently cross-linked (Glycyl lysine isopeptide (Lys-Gly) (interchain with G-Cter in SUMO2)). Asp-177 (proton acceptor) is an active-site residue. The segment at 352 to 396 is disordered; that stretch reads KPVAKKRKKEAEESVESSVEDMECSDKQTEEATQTRSKTRKRVQK. Acidic residues predominate over residues 364 to 374; the sequence is ESVESSVEDME. Ser-376 is modified (phosphoserine). The tract at residues 387–393 is required for interaction with the nucleosome; sequence RSKTRKR.

The protein belongs to the protein kinase superfamily. CK1 Ser/Thr protein kinase family. VRK subfamily. In terms of assembly, interacts with HDAC1, KAT2B, SETDB1, KDM3A and KDM4A. Associates with the nucleosome through interactions with nucleosome DNA, histone H2A and histone H2B; the interaction with H2A and H2B is mediated by the nucleosome acidic patch, a cluster of negatively charged residues of H2A and H2B forming a cleft within the nucleosome core. Autophosphorylated at various serine and threonine residues. Autophosphorylation does not impair its ability to phosphorylate p53/TP53. Phosphorylation by PLK3 leads to induction of Golgi fragmentation during mitosis.

The protein resides in the nucleus. The protein localises to the cytoplasm. Its subcellular location is the cajal body. It catalyses the reaction L-seryl-[protein] + ATP = O-phospho-L-seryl-[protein] + ADP + H(+). The enzyme catalyses L-threonyl-[protein] + ATP = O-phospho-L-threonyl-[protein] + ADP + H(+). Its activity is regulated as follows. Active in presence of Mn(2+), Mg(2+) and Zn(2+), but is not functional with Ca(2+) or Cu(2+). Has a higher affinity for Mn(2+) than for Mg(2+). RAN inhibits its autophosphorylation and its ability to phosphorylate histone H3. Functionally, serine/threonine kinase involved in the regulation of key cellular processes including the cell cycle, nuclear condensation, transcription regulation, and DNA damage response. Controls chromatin organization and remodeling by mediating phosphorylation of histone H3 on 'Thr-4' and histone H2AX (H2aXT4ph). It also phosphorylates KAT5 in response to DNA damage, promoting KAT5 association with chromatin and histone acetyltransferase activity. Is involved in the regulation of cell cycle progression of neural progenitors, and is required for proper cortical neuronal migration. Is involved in neurite elongation and branching in motor neurons, and has an essential role in Cajal bodies assembly, acting through COIL phosphorylation and the control of coilin degradation. Involved in Golgi disassembly during the cell cycle: following phosphorylation by PLK3 during mitosis, it is required to induce Golgi fragmentation. Phosphorylates BANF1: disrupts its ability to bind DNA, reduces its binding to LEM domain-containing proteins and causes its relocalization from the nucleus to the cytoplasm. Phosphorylates TP53BP1 and p53/TP53 on 'Thr-18', preventing the interaction between p53/TP53 and MDM2. Phosphorylates ATF2 which activates its transcriptional activity. Phosphorylates JUN. This is Serine/threonine-protein kinase VRK1 (VRK1) from Bos taurus (Bovine).